Reading from the N-terminus, the 701-residue chain is Pre-mRNA-splicing factor CLF1 (701 aa).

HAT repeat units lie at residues 43–75, 78–110, 112–144, 146–177, 179–210, 214–253, 266–299, 309–341, 343–378, 388–424, 545–576, and 601–642; these read SYQQ…WEIE, HDFP…LELS, KNIN…TEEM, KNYP…FEAR, EEKE…YEME, DDVN…SWTS, EIFK…FEKN, SVLI…LLQN, SNKS…FWIW, NNPV…FELR, MQYD…FESS, and SQIE…VNGS.

Belongs to the crooked-neck family. Associated with the spliceosome.

The protein localises to the nucleus. Its function is as follows. Involved in pre-mRNA splicing and cell cycle progression. Required for the spliceosome assembly and initiation of the DNA replication. In Candida albicans (strain SC5314 / ATCC MYA-2876) (Yeast), this protein is Pre-mRNA-splicing factor CLF1 (CLF1).